The chain runs to 546 residues: MPKILTFNEDARRALEHGVNALANAVKVTIGPRGRNVVIDKHYGAATITNDGVTIAREIELEDPYENLGAQLAKEVATKTNDVAGDGTTTATVLAQEMVRFGLKQVTAGAAPLTLKLGIEAAVEAVSAALLKQAIEVNSKETIAQVAAISAQDPQVGELIAEAIDKIGKDGVITVEESQTLGLDLELTEGMQFDKGYISPYFVTDAEAQEAVLEDAYVLLYPGKISALNEILPVLEQVVQERKPLLIIAEEVEGEALSTLVVNSIRKTFQVVAVKAPGFGDRRKALLQDIAVLTGGQVVASEVGLSLDAVTLADLGRARRVVVDKDNTTIVDGVGEASSIADRVRQLKQEIEVSDSDWDREKLQERLAKLAGGVAVIRVGAATEVELKERKHRLEDAVSATRAAIEEGIIAGGGSALTHVASVLDDGLGRTGDELAGVRIVRRALDAPLSWIARNAGLEGAVIVSKVKELEPGRGYNAATGEYTDLIAAGVIDPVKVTRSAVANAASIAALLITTEGLVVEKPAEPAPQDGHGHGHGHSHPQGPGF.

Residues 29–32, 86–90, Gly413, 477–479, and Asp493 contribute to the ATP site; these read TIGP, DGTTT, and NAA. The tract at residues 523–546 is disordered; the sequence is PAEPAPQDGHGHGHGHSHPQGPGF.

The protein belongs to the chaperonin (HSP60) family. Forms a cylinder of 14 subunits composed of two heptameric rings stacked back-to-back. Interacts with the co-chaperonin GroES.

It localises to the cytoplasm. The catalysed reaction is ATP + H2O + a folded polypeptide = ADP + phosphate + an unfolded polypeptide.. Together with its co-chaperonin GroES, plays an essential role in assisting protein folding. The GroEL-GroES system forms a nano-cage that allows encapsulation of the non-native substrate proteins and provides a physical environment optimized to promote and accelerate protein folding. This Frankia casuarinae (strain DSM 45818 / CECT 9043 / HFP020203 / CcI3) protein is Chaperonin GroEL 1.